We begin with the raw amino-acid sequence, 491 residues long: Delayed-rectifier potassium channel regulatory subunit KCNS3 (491 aa).

Residues 1 to 182 (MVFGEFFHRP…IRMENPAYCL (182 aa)) lie on the Cytoplasmic side of the membrane. A helical transmembrane segment spans residues 183–204 (SAKLIAISSLSVVLASIVAMCV). Residues 205-220 (HSMSEFQNEDGEVDDP) are Extracellular-facing. A helical membrane pass occupies residues 221–243 (VLEGVEIACIAWFTGELAVRLAA). At 244-254 (APCQKKFWKNP) the chain is on the cytoplasmic side. The helical transmembrane segment at 255–275 (LNIIDFVSIIPFYATLAVDTK) threads the bilayer. Topologically, residues 276 to 285 (EEESEDIENM) are extracellular. A helical; Voltage-sensor transmembrane segment spans residues 286-306 (GKVVQILRLMRIFRILKLARH). Over 307–321 (SVGLRSLGATLRHSY) the chain is Cytoplasmic. Residues 322-343 (HEVGLLLLFLSVGISIFSVLIY) traverse the membrane as a helical segment. Residues 344–357 (SVEKDDHTSSLTSI) are Extracellular-facing. The helical intramembrane region spans 358–369 (PICWWWATISMT). Residues 370-375 (TVGYGD) carry the Selectivity filter motif. The stretch at 370 to 377 (TVGYGDTH) is an intramembrane region. The Extracellular segment spans residues 378–384 (PVTLAGK). Residues 385–413 (LIASTCIICGILVVALPITIIFNKFSKYY) traverse the membrane as a helical segment. Topologically, residues 414-491 (QKQKDIDVDQ…TTSLENCTAK (78 aa)) are cytoplasmic.

The protein belongs to the potassium channel family. S (TC 1.A.1.2) subfamily. Kv9.3/KCNS3 sub-subfamily. Heterotetramer with KCNB1. Does not form homomultimers. Detected in whole normal term placental and placental chorionic plate arteries and veins. Detected in syncytiotrophoblast and in blood vessel endothelium within intermediate villi and chorionic plate (at protein level). Detected in most tissues, but not in peripheral blood lymphocytes. The highest levels of expression are in lung.

It is found in the cell membrane. Its function is as follows. Potassium channel regulatory subunit that modulates the delayed rectifier potassium channel activity of KCNB1 by namely slowing down the deactivation and inactivation time constants. While it does not form functional channel on its own, it can form functional heterotetrameric channels with KCNB1. The chain is Delayed-rectifier potassium channel regulatory subunit KCNS3 from Homo sapiens (Human).